We begin with the raw amino-acid sequence, 164 residues long: Interferon gamma (164 aa).

A signal peptide spans 1–19 (MTCQTYNLFVLSVIMIYYG). N-linked (GlcNAc...) asparagine glycans are attached at residues Asn-42 and Asn-61.

This sequence belongs to the type II (or gamma) interferon family. In terms of assembly, homodimer.

Its subcellular location is the secreted. Its function is as follows. Produced by lymphocytes activated by specific antigens or mitogens. IFN-gamma, in addition to having antiviral activity, has important immunoregulatory functions. It is a potent activator of macrophages, it has antiproliferative effects on transformed cells and it can potentiate the antiviral and antitumor effects of the type I interferons. In Gallus gallus (Chicken), this protein is Interferon gamma (IFNG).